The chain runs to 496 residues: Membrane-bound lytic murein transglycosylase F (496 aa).

An N-terminal signal peptide occupies residues 1–31; that stretch reads MPIFSTRVLTYLRCIFRLFIGLTLLLTLVGC. Positions 32-271 are non-LT domain; the sequence is DFYTPSSQLE…KLDEKYFGHV (240 aa). The segment at 273–496 is LT domain; the sequence is NFDFVDTRTF…AEVVKQITLR (224 aa). Residue E316 is part of the active site. The tract at residues 464 to 486 is disordered; that stretch reads HRREELDDDDSSEPPSAERPTVI.

In the N-terminal section; belongs to the bacterial solute-binding protein 3 family. This sequence in the C-terminal section; belongs to the transglycosylase Slt family.

It is found in the cell outer membrane. The enzyme catalyses Exolytic cleavage of the (1-&gt;4)-beta-glycosidic linkage between N-acetylmuramic acid (MurNAc) and N-acetylglucosamine (GlcNAc) residues in peptidoglycan, from either the reducing or the non-reducing ends of the peptidoglycan chains, with concomitant formation of a 1,6-anhydrobond in the MurNAc residue.. Functionally, murein-degrading enzyme that degrades murein glycan strands and insoluble, high-molecular weight murein sacculi, with the concomitant formation of a 1,6-anhydromuramoyl product. Lytic transglycosylases (LTs) play an integral role in the metabolism of the peptidoglycan (PG) sacculus. Their lytic action creates space within the PG sacculus to allow for its expansion as well as for the insertion of various structures such as secretion systems and flagella. The polypeptide is Membrane-bound lytic murein transglycosylase F (Aeromonas hydrophila subsp. hydrophila (strain ATCC 7966 / DSM 30187 / BCRC 13018 / CCUG 14551 / JCM 1027 / KCTC 2358 / NCIMB 9240 / NCTC 8049)).